The sequence spans 198 residues: MSNLGKCTRCQKTVYSQEGFIAVKVPFHRSCFKCEVCNWQLVLTNYKSINGKVYCANHYPVGGLSVTPEKTHTTSDDLVMKNALNAPRVETVNEQLRGGNEKPQTSTDDLVTKNALNAPKSNLVNNQVRGTSDSAPLTSADDLVTRNALKAPKSDLVNNQVRGTSEMGPQAGIDIVTANALKAPKLETMSGYQKSVQN.

Residues 5 to 65 (GKCTRCQKTV…ANHYPVGGLS (61 aa)) form the LIM zinc-binding domain.

It localises to the cell projection. Its subcellular location is the pseudopodium. The protein resides in the cytoplasm. The protein localises to the cell cortex. It is found in the cytoskeleton. In terms of biological role, binds to F-actin and may modulate the chemotactic response during early development and contribute to the maintenance of the strength of the actin cytoskeleton. This is LIM domain-containing protein D (limD) from Dictyostelium discoideum (Social amoeba).